Reading from the N-terminus, the 342-residue chain is Transmembrane protein 115 homolog (342 aa).

Over 1–21 (MQYSSRFLELNIPDSFLNINK) the chain is Cytoplasmic. A helical membrane pass occupies residues 22 to 42 (IPDATKFITVTYICLTATLFC). Over 43–121 (IRRSLYNKLV…NWNSSKEMFK (79 aa)) the chain is Lumenal. An N-linked (GlcNAc...) asparagine glycan is attached at Asn114. Residues 122–142 (FIIVLGSLTNVLIIMLTLLVS) traverse the membrane as a helical segment. Topologically, residues 143–159 (FFSNKVRLDIPLDGNYT) are cytoplasmic. A helical transmembrane segment spans residues 160–180 (ILIGFPIIYRQLLPETTIIHL). Topologically, residues 181–207 (KTPQFLAKNFRFKLLPIFVMFTMTVTQ) are lumenal. Residues 208–228 (IIWFHHFAQLFSIWVTFFASW) form a helical membrane-spanning segment. The Cytoplasmic portion of the chain corresponds to 229–342 (SYLRFFQKLA…QVLEERMVNP (114 aa)).

The protein belongs to the TMEM115 family. In terms of assembly, homooligomer.

The protein localises to the golgi apparatus membrane. Functionally, may play a role in retrograde transport of proteins from the Golgi to the endoplasmic reticulum. This Saccharomyces cerevisiae (strain ATCC 204508 / S288c) (Baker's yeast) protein is Transmembrane protein 115 homolog.